The following is a 549-amino-acid chain: Alpha-amylase (549 aa).

Residues 1–34 (MLTFHRIIRKGWMFLLAFLLTALLFCPTGQPAKA) form the signal peptide. Ca(2+) contacts are provided by aspartate 139, aspartate 196, alanine 218, aspartate 220, aspartate 231, and aspartate 237. Aspartate 196 provides a ligand contact to Na(+). Na(+) is bound by residues aspartate 220, aspartate 231, aspartate 237, and leucine 238. Ca(2+) is bound at residue aspartate 239. Catalysis depends on aspartate 268, which acts as the Nucleophile. Ca(2+) is bound at residue histidine 272. The Proton donor role is filled by glutamate 298. Positions 337, 339, 440, 441, and 464 each coordinate Ca(2+).

The protein belongs to the glycosyl hydrolase 13 family. In terms of assembly, monomer. Ca(2+) is required as a cofactor. It depends on Na(+) as a cofactor.

It is found in the secreted. The catalysed reaction is Endohydrolysis of (1-&gt;4)-alpha-D-glucosidic linkages in polysaccharides containing three or more (1-&gt;4)-alpha-linked D-glucose units.. The sequence is that of Alpha-amylase (amyS) from Geobacillus stearothermophilus (Bacillus stearothermophilus).